The following is a 117-amino-acid chain: Large ribosomal subunit protein bL19 (117 aa).

It belongs to the bacterial ribosomal protein bL19 family.

Functionally, this protein is located at the 30S-50S ribosomal subunit interface and may play a role in the structure and function of the aminoacyl-tRNA binding site. This Proteus mirabilis (strain HI4320) protein is Large ribosomal subunit protein bL19.